Consider the following 259-residue polypeptide: Ribosomal RNA small subunit methyltransferase J (259 aa).

Residues 109-110, 125-126, 161-162, and D179 contribute to the S-adenosyl-L-methionine site; these read RD, ER, and SS.

It belongs to the methyltransferase superfamily. RsmJ family.

It localises to the cytoplasm. The catalysed reaction is guanosine(1516) in 16S rRNA + S-adenosyl-L-methionine = N(2)-methylguanosine(1516) in 16S rRNA + S-adenosyl-L-homocysteine + H(+). Functionally, specifically methylates the guanosine in position 1516 of 16S rRNA. This Shewanella putrefaciens (strain CN-32 / ATCC BAA-453) protein is Ribosomal RNA small subunit methyltransferase J.